We begin with the raw amino-acid sequence, 877 residues long: MSSSSNTSSHRSYGLRRSQRSMNLNRATLLAPPTPSSLYDANNSTSSTSSQKPNTSFTSLFGPRKQTTSSPSFSHAAPLHPLSPPSFTHSQPQIQAQPVPRRPSLFDRPNLVSRSSSRLGDSPSLSPVAQVANPIHHTAPSPSDVRAFPIHKNASTGVKRSFFSSSMSNGAMSPPSHSPSPFLQSSQHIPPSTPAQKLRKKNNFDSFRISNSHISPFASGSFSPFATSSPNFLSTSTPAPPNSNNANPSTLFSSIPSSRHTTSNHFPSNSAQSSLFSPTARPLTARKLGFASSQTKSAVSNNHSRNSSKDASFMMKSFIPSNRSHPQTQQNESSLFSDNSMVNSSSNSFSLFPNATLPNPPSSELLTTPFQQIKPPSQVFMSTGLLSKQHRPRKNINFTPLPPSTPSKPSTFVRPHSSSTDSPPSPSTPSNTQTDSYFIQRENTPTNHNSIPTIQLEKSSMDFLRFDPPPSAVKTSHNYGLPFLSNQRCPATPTRNPFAFENTVSIHMDGRQPSPIKSRNNNQMSFAMEEEADVSQPSSSSFTLSFPSALTSSKVSSSTSHLLTRFRNVTLLGSGEFSEVFQVEDPVEKTLKYAVKKLKVKFSGPKERNRLLQEVSIQRALKGHDHIVELMDSWEHGGFLYMQVELCENGSLDRFLEEQGQLSRLDEFRVWKILVEVALGLQFIHHKNYVHLDLKPANVMITFEGTLKIGDFGMASVWPVPRGMEREGDCEYIAPEVLANHLYDKPADIFSLGITVFEAAANIVLPDNGQSWQKLRSGDLSDAPRLSSTDNGSSLTSSSRETPANSIIGQGGLDRVVEWMLSPEPRNRPTIDQILATDEVCWVEMRRKAGAIIYEGIHGSSSNPQGDQMMEDWQVNV.

Residues 1–12 are compositionally biased toward low complexity; it reads MSSSSNTSSHRS. Disordered stretches follow at residues 1–128, 165–198, 230–278, 319–340, and 387–435; these read MSSS…LSPV, SSMS…AQKL, PNFL…LFSP, IPSN…SDNS, and SKQH…TQTD. Polar residues-rich tracts occupy residues 36–73 and 85–96; these read SSLY…SPSF and PSFTHSQPQIQA. Low complexity predominate over residues 113-127; sequence SRSSSRLGDSPSLSP. The segment covering 179-190 has biased composition (polar residues); that stretch reads PSPFLQSSQHIP. A compositionally biased stretch (low complexity) spans 230-250; sequence PNFLSTSTPAPPNSNNANPST. Polar residues-rich tracts occupy residues 251-277 and 319-332; these read LFSS…SLFS and IPSN…QQNE. Residues 407–435 are compositionally biased toward low complexity; sequence SKPSTFVRPHSSSTDSPPSPSTPSNTQTD. In terms of domain architecture, Protein kinase spans 566-843; the sequence is FRNVTLLGSG…ILATDEVCWV (278 aa). ATP is bound by residues 572–580 and Lys596; that span reads LGSGEFSEV. Asp693 (proton acceptor) is an active-site residue. The Mg(2+) site is built by Asn698 and Asp711. Positions 775 to 808 are disordered; that stretch reads LRSGDLSDAPRLSSTDNGSSLTSSSRETPANSII. A compositionally biased stretch (low complexity) spans 786–799; it reads LSSTDNGSSLTSSS.

Belongs to the protein kinase superfamily. Ser/Thr protein kinase family. WEE1 subfamily. Requires Mg(2+) as cofactor. Post-translationally, phosphorylated in the C-terminal by NIM1/CDR1.

It is found in the nucleus. The catalysed reaction is L-tyrosyl-[protein] + ATP = O-phospho-L-tyrosyl-[protein] + ADP + H(+). Its activity is regulated as follows. Negatively regulated by phosphorylation in the M-phase. Protein kinase that acts both on serines and on tyrosines. It acts as a dosage-dependent negative regulator of entry into mitosis (G2 to M transition). Phosphorylates and inhibits cdc2. This is Mitosis inhibitor protein kinase wee1 (wee1) from Schizosaccharomyces pombe (strain 972 / ATCC 24843) (Fission yeast).